The primary structure comprises 492 residues: MKKAILSVSNKTGIVEFAKALTQLNYELYSTGGTKRILDEANVPVRSVSDLTHFPEIMDGRVKTLHPAVHGGILADRNKPQHLNELSEQHIDLIDMVVVNLYPFQQTVANPDVTMDEAIENIDIGGPTMLRAAAKNYKHVTTIVHPADYHEVLTRLRNDSLDESYRQSLMIKVFEHTAEYDEAIVRFFKGDKETLRYGENPQQSAYFVRTSNAKHTIAGAKQLHGKQLSYNNIKDADATLALVKKFDTPAAVAVKHMNPCGVGIGDTIEQAFQHAYEADSQSIFGGIVALNRAVTPELAEQLHSIFLEVIIAPKFTDEALDILKQKKNVRLLEIDMTIDSNEEEFVSVSGGYLVQDKDNYVVPKEEMKVVTEVAPTDEQWEAMLLGWKVVPSVKSNAIILSNNKQTVGIGAGQMNRVGAAKIALERAIEINDHVALVSDGFFPMGDTVELAAQHGIKAIIQPGGSIKDQDSIDMANKHGIAMVVTGTRHFKH.

An MGS-like domain is found at Met1 to Val144.

The protein belongs to the PurH family.

The enzyme catalyses (6R)-10-formyltetrahydrofolate + 5-amino-1-(5-phospho-beta-D-ribosyl)imidazole-4-carboxamide = 5-formamido-1-(5-phospho-D-ribosyl)imidazole-4-carboxamide + (6S)-5,6,7,8-tetrahydrofolate. It carries out the reaction IMP + H2O = 5-formamido-1-(5-phospho-D-ribosyl)imidazole-4-carboxamide. Its pathway is purine metabolism; IMP biosynthesis via de novo pathway; 5-formamido-1-(5-phospho-D-ribosyl)imidazole-4-carboxamide from 5-amino-1-(5-phospho-D-ribosyl)imidazole-4-carboxamide (10-formyl THF route): step 1/1. It participates in purine metabolism; IMP biosynthesis via de novo pathway; IMP from 5-formamido-1-(5-phospho-D-ribosyl)imidazole-4-carboxamide: step 1/1. This Staphylococcus aureus (strain JH1) protein is Bifunctional purine biosynthesis protein PurH.